Here is a 301-residue protein sequence, read N- to C-terminus: Peptidyl-prolyl cis-trans isomerase E (301 aa).

The region spanning 5–83 is the RRM domain; it reads KRVLYVGGLA…GRTIRVNLAK (79 aa). Phosphoserine is present on residues S91, S97, and S119. The segment at 107–140 is disordered; sequence GKTLEENKEEEGSEPPKAETQEGEPAAKKARSNP. The PPIase cyclophilin-type domain occupies 143 to 299; it reads YMDIKIGNKP…QKVIIADCGE (157 aa).

This sequence belongs to the cyclophilin-type PPIase family. PPIase E subfamily. In terms of assembly, identified in the spliceosome C complex. Component of the XAB2 complex, a multimeric protein complex composed of XAB2, PRPF19, AQR, ZNF830, ISY1, and PPIE. Identified in a pentameric intron-binding (IB) complex composed of AQR, XAB2, ISY1, ZNF830 and PPIE that is incorporated into the spliceosome as a preassembled complex. The IB complex does not contain PRPF19. Interacts (via RNA-binding domain) with KMT2A (via the third PHD-type zinc-finger).

The protein localises to the nucleus. It carries out the reaction [protein]-peptidylproline (omega=180) = [protein]-peptidylproline (omega=0). In terms of biological role, involved in pre-mRNA splicing as component of the spliceosome. Combines RNA-binding and PPIase activities. Binds mRNA and has a preference for single-stranded RNA molecules with poly-A and poly-U stretches, suggesting it binds to the poly(A)-region in the 3'-UTR of mRNA molecules. Catalyzes the cis-trans isomerization of proline imidic peptide bonds in proteins. Inhibits KMT2A activity; this requires proline isomerase activity. This chain is Peptidyl-prolyl cis-trans isomerase E (PPIE), found in Pongo abelii (Sumatran orangutan).